The sequence spans 450 residues: Phosphoglucosamine mutase (450 aa).

The active-site Phosphoserine intermediate is Ser-102. 4 residues coordinate Mg(2+): Ser-102, Asp-243, Asp-245, and Asp-247. Ser-102 is modified (phosphoserine).

This sequence belongs to the phosphohexose mutase family. Mg(2+) serves as cofactor. In terms of processing, activated by phosphorylation.

The enzyme catalyses alpha-D-glucosamine 1-phosphate = D-glucosamine 6-phosphate. Functionally, catalyzes the conversion of glucosamine-6-phosphate to glucosamine-1-phosphate. This Rhizobium meliloti (strain 1021) (Ensifer meliloti) protein is Phosphoglucosamine mutase.